Here is a 430-residue protein sequence, read N- to C-terminus: UDP-glucuronate 4-epimerase 3 (430 aa).

The next 2 helical transmembrane spans lie at Ser29–Tyr49 and Gly90–Leu110. Ser92–Phe123 lines the NAD(+) pocket. Tyr242 functions as the Proton acceptor in the catalytic mechanism.

The protein belongs to the NAD(P)-dependent epimerase/dehydratase family. Homodimer. As to expression, in roots, leaves, siliques, flowers, pollen and stems.

The protein resides in the golgi apparatus. Its subcellular location is the golgi stack membrane. It carries out the reaction UDP-alpha-D-glucuronate = UDP-alpha-D-galacturonate. In terms of biological role, involved in the synthesis of the negatively charged monosaccharide that forms the backbone of pectic cell wall components. This is UDP-glucuronate 4-epimerase 3 (GAE3) from Arabidopsis thaliana (Mouse-ear cress).